The primary structure comprises 209 residues: Redox-sensing transcriptional repressor Rex (209 aa).

Residues 16–55 constitute a DNA-binding region (H-T-H motif); the sequence is VYIQVLTGLKRDGVEVISSEKLARACSVNPSQIRKDLAYF. An NAD(+)-binding site is contributed by 90–95; sequence GVGNLG.

This sequence belongs to the transcriptional regulatory Rex family. Homodimer.

The protein resides in the cytoplasm. Its function is as follows. Modulates transcription in response to changes in cellular NADH/NAD(+) redox state. In Maridesulfovibrio salexigens (strain ATCC 14822 / DSM 2638 / NCIMB 8403 / VKM B-1763) (Desulfovibrio salexigens), this protein is Redox-sensing transcriptional repressor Rex.